The chain runs to 105 residues: Flagellar transcriptional regulator FlhD (105 aa).

Belongs to the FlhD family. Homodimer; disulfide-linked. Forms a heterohexamer composed of two FlhC and four FlhD subunits. Each FlhC binds a FlhD dimer, forming a heterotrimer, and a hexamer assembles by dimerization of two heterotrimers.

It localises to the cytoplasm. Its function is as follows. Functions in complex with FlhC as a master transcriptional regulator that regulates transcription of several flagellar and non-flagellar operons by binding to their promoter region. Activates expression of class 2 flagellar genes, including fliA, which is a flagellum-specific sigma factor that turns on the class 3 genes. Also regulates genes whose products function in a variety of physiological pathways. In Nitrosomonas europaea (strain ATCC 19718 / CIP 103999 / KCTC 2705 / NBRC 14298), this protein is Flagellar transcriptional regulator FlhD.